A 43-amino-acid polypeptide reads, in one-letter code: Neurotrophic factor BDNF (43 aa).

This sequence belongs to the NGF-beta family.

It localises to the secreted. Promotes the survival of neuronal populations that are all located either in the central nervous system or directly connected to it. The polypeptide is Neurotrophic factor BDNF (BDNF) (Macrovipera lebetinus (Levantine viper)).